The following is a 179-amino-acid chain: Inner membrane-spanning protein YciB (179 aa).

5 consecutive transmembrane segments (helical) span residues 22–42, 50–70, 76–96, 121–141, and 149–169; these read IYAA…YTWI, MALI…FFHN, WKVT…QWVM, IAWA…AFWM, and FKVF…GVYI.

It belongs to the YciB family.

The protein resides in the cell inner membrane. Functionally, plays a role in cell envelope biogenesis, maintenance of cell envelope integrity and membrane homeostasis. The sequence is that of Inner membrane-spanning protein YciB from Enterobacter sp. (strain 638).